Here is a 336-residue protein sequence, read N- to C-terminus: Holliday junction branch migration complex subunit RuvB (336 aa).

The interval 4-184 (ADRLIQPQVI…FGIPLRLEFY (181 aa)) is large ATPase domain (RuvB-L). ATP is bound by residues R24, G65, K68, T69, T70, 131–133 (EDY), R174, Y184, and R221. Mg(2+) is bound at residue T69. The tract at residues 185-255 (NIKDLSTIVI…VAELALDMLD (71 aa)) is small ATPAse domain (RuvB-S). Residues 258–336 (AEGFDYMDRK…HFNLIQPEAK (79 aa)) form a head domain (RuvB-H) region. DNA-binding residues include R294, R313, and R318.

Belongs to the RuvB family. As to quaternary structure, homohexamer. Forms an RuvA(8)-RuvB(12)-Holliday junction (HJ) complex. HJ DNA is sandwiched between 2 RuvA tetramers; dsDNA enters through RuvA and exits via RuvB. An RuvB hexamer assembles on each DNA strand where it exits the tetramer. Each RuvB hexamer is contacted by two RuvA subunits (via domain III) on 2 adjacent RuvB subunits; this complex drives branch migration. In the full resolvosome a probable DNA-RuvA(4)-RuvB(12)-RuvC(2) complex forms which resolves the HJ.

The protein resides in the cytoplasm. The catalysed reaction is ATP + H2O = ADP + phosphate + H(+). Its function is as follows. The RuvA-RuvB-RuvC complex processes Holliday junction (HJ) DNA during genetic recombination and DNA repair, while the RuvA-RuvB complex plays an important role in the rescue of blocked DNA replication forks via replication fork reversal (RFR). RuvA specifically binds to HJ cruciform DNA, conferring on it an open structure. The RuvB hexamer acts as an ATP-dependent pump, pulling dsDNA into and through the RuvAB complex. RuvB forms 2 homohexamers on either side of HJ DNA bound by 1 or 2 RuvA tetramers; 4 subunits per hexamer contact DNA at a time. Coordinated motions by a converter formed by DNA-disengaged RuvB subunits stimulates ATP hydrolysis and nucleotide exchange. Immobilization of the converter enables RuvB to convert the ATP-contained energy into a lever motion, pulling 2 nucleotides of DNA out of the RuvA tetramer per ATP hydrolyzed, thus driving DNA branch migration. The RuvB motors rotate together with the DNA substrate, which together with the progressing nucleotide cycle form the mechanistic basis for DNA recombination by continuous HJ branch migration. Branch migration allows RuvC to scan DNA until it finds its consensus sequence, where it cleaves and resolves cruciform DNA. The chain is Holliday junction branch migration complex subunit RuvB from Shewanella piezotolerans (strain WP3 / JCM 13877).